The following is a 92-amino-acid chain: DLAAKLNALGEELRFVLLTSGANVADYAQAPADAWQSDLLKGLKVVLSKAEGEKCPRCWHYTSDVGKVAEHAEICGRCVSNVAGDGEQRKFA.

Residues C55, C58, C75, and C78 each coordinate Zn(2+).

Belongs to the class-I aminoacyl-tRNA synthetase family. IleS type 1 subfamily. Monomer. The cofactor is Zn(2+).

Its subcellular location is the cytoplasm. It carries out the reaction tRNA(Ile) + L-isoleucine + ATP = L-isoleucyl-tRNA(Ile) + AMP + diphosphate. Its function is as follows. Catalyzes the attachment of isoleucine to tRNA(Ile). As IleRS can inadvertently accommodate and process structurally similar amino acids such as valine, to avoid such errors it has two additional distinct tRNA(Ile)-dependent editing activities. One activity is designated as 'pretransfer' editing and involves the hydrolysis of activated Val-AMP. The other activity is designated 'posttransfer' editing and involves deacylation of mischarged Val-tRNA(Ile). This Klebsiella aerogenes (Enterobacter aerogenes) protein is Isoleucine--tRNA ligase (ileS).